Here is a 468-residue protein sequence, read N- to C-terminus: Uronate isomerase (468 aa).

This sequence belongs to the metallo-dependent hydrolases superfamily. Uronate isomerase family.

The enzyme catalyses D-glucuronate = D-fructuronate. It carries out the reaction aldehydo-D-galacturonate = keto-D-tagaturonate. The protein operates within carbohydrate metabolism; pentose and glucuronate interconversion. The chain is Uronate isomerase from Lachnospira eligens (strain ATCC 27750 / DSM 3376 / VPI C15-48 / C15-B4) (Eubacterium eligens).